The chain runs to 154 residues: Ribosome maturation factor RimP (154 aa).

The protein belongs to the RimP family.

It is found in the cytoplasm. Functionally, required for maturation of 30S ribosomal subunits. The chain is Ribosome maturation factor RimP from Carboxydothermus hydrogenoformans (strain ATCC BAA-161 / DSM 6008 / Z-2901).